The sequence spans 157 residues: Nicotinate dehydrogenase small FeS subunit (157 aa).

The region spanning isoleucine 4–valine 80 is the 2Fe-2S ferredoxin-type domain. Residues cysteine 42, cysteine 47, cysteine 50, cysteine 62, cysteine 101, cysteine 104, cysteine 136, and cysteine 138 each contribute to the [2Fe-2S] cluster site.

In terms of assembly, heterooctamer of NDHM, NDHL, NDHS and NDHF. Dimer of heterotetramers. [2Fe-2S] cluster serves as cofactor.

It catalyses the reaction nicotinate + NADP(+) + H2O = 6-hydroxynicotinate + NADPH + H(+). Its pathway is cofactor degradation; nicotinate degradation; 6-hydroxynicotinate from nicotinate: step 1/1. Its activity is regulated as follows. Reversibly inactivated by selenide and sulfide. Not inhibited by cyanide. Catalyzes the hydroxylation of nicotinate to 6-hydroxynicotinate. Also active against 2-pyrazinecarboxylic acid, but inactive against other nicotinate analogs. The polypeptide is Nicotinate dehydrogenase small FeS subunit (ndhS) (Eubacterium barkeri (Clostridium barkeri)).